Here is a 112-residue protein sequence, read N- to C-terminus: Mitochondrial import inner membrane translocase subunit TIM14-2 (112 aa).

A helical transmembrane segment spans residues 7 to 25 (AGAAVAAAAYAGKYGIEAW). The J domain occupies 53 to 112 (EAALILGVRESVAAEKVKEAHRRVMVANHPDAGGSHYLASKINEAKDMMLGKTKNSGSAF).

The protein belongs to the TIM14 family. Probable component of the PAM complex at least composed of a mitochondrial HSP70 protein, TIMM44 and TIMM14. The complex interacts with the TIMM23 component of the TIM17:23 complex.

It is found in the mitochondrion. It localises to the mitochondrion inner membrane. In terms of biological role, component of the PAM complex, a complex required for the translocation of transit peptide-containing proteins from the inner membrane into the mitochondrial matrix in an ATP-dependent manner. In Arabidopsis thaliana (Mouse-ear cress), this protein is Mitochondrial import inner membrane translocase subunit TIM14-2 (TIM14-2).